The following is a 435-amino-acid chain: Methylenetetrahydrofolate--tRNA-(uracil-5-)-methyltransferase TrmFO (435 aa).

An FAD-binding site is contributed by 7 to 12 (GAGLAG).

This sequence belongs to the MnmG family. TrmFO subfamily. It depends on FAD as a cofactor.

The protein localises to the cytoplasm. The enzyme catalyses uridine(54) in tRNA + (6R)-5,10-methylene-5,6,7,8-tetrahydrofolate + NADH + H(+) = 5-methyluridine(54) in tRNA + (6S)-5,6,7,8-tetrahydrofolate + NAD(+). It catalyses the reaction uridine(54) in tRNA + (6R)-5,10-methylene-5,6,7,8-tetrahydrofolate + NADPH + H(+) = 5-methyluridine(54) in tRNA + (6S)-5,6,7,8-tetrahydrofolate + NADP(+). Functionally, catalyzes the folate-dependent formation of 5-methyl-uridine at position 54 (M-5-U54) in all tRNAs. The chain is Methylenetetrahydrofolate--tRNA-(uracil-5-)-methyltransferase TrmFO from Thermotoga neapolitana (strain ATCC 49049 / DSM 4359 / NBRC 107923 / NS-E).